The chain runs to 208 residues: N-(5'-phosphoribosyl)anthranilate isomerase (208 aa).

It belongs to the TrpF family.

The enzyme catalyses N-(5-phospho-beta-D-ribosyl)anthranilate = 1-(2-carboxyphenylamino)-1-deoxy-D-ribulose 5-phosphate. Its pathway is amino-acid biosynthesis; L-tryptophan biosynthesis; L-tryptophan from chorismate: step 3/5. In Pyrococcus furiosus (strain ATCC 43587 / DSM 3638 / JCM 8422 / Vc1), this protein is N-(5'-phosphoribosyl)anthranilate isomerase.